A 301-amino-acid chain; its full sequence is Acetyl-coenzyme A carboxylase carboxyl transferase subunit beta (301 aa).

One can recognise a CoA carboxyltransferase N-terminal domain in the interval 25 to 294 (LWIKDPSTGE…NSDAPAPQKP (270 aa)).

This sequence belongs to the AccD/PCCB family. Acetyl-CoA carboxylase is a heterohexamer composed of biotin carboxyl carrier protein (AccB), biotin carboxylase (AccC) and two subunits each of ACCase subunit alpha (AccA) and ACCase subunit beta (AccD).

The protein localises to the cytoplasm. It carries out the reaction N(6)-carboxybiotinyl-L-lysyl-[protein] + acetyl-CoA = N(6)-biotinyl-L-lysyl-[protein] + malonyl-CoA. It participates in lipid metabolism; malonyl-CoA biosynthesis; malonyl-CoA from acetyl-CoA: step 1/1. Functionally, component of the acetyl coenzyme A carboxylase (ACC) complex. Biotin carboxylase (BC) catalyzes the carboxylation of biotin on its carrier protein (BCCP) and then the CO(2) group is transferred by the transcarboxylase to acetyl-CoA to form malonyl-CoA. This Brucella canis (strain ATCC 23365 / NCTC 10854 / RM-666) protein is Acetyl-coenzyme A carboxylase carboxyl transferase subunit beta.